The following is a 274-amino-acid chain: AQTVPYGIPLIKADKVQAQGYKGANVKVGIIDTGIAASHTDLKVVGGASFVSGESYNTDGNGHGTHVAGTVAALDNTTGVLGVAPNVSLYAIKVLNSSGSGTYSAIVSGIEWATQNGLDVINMSLGGPSGSTALKQAVDKAYASGIVVVAAAGNSGSSGSQNTIGYPAKYDSVIAVGAVDSNKNRASFSSVGAELEVMAPGVSVYSTYPSNTYTSLNGTSMASPHVAGAAALILSKYPTLSASQVRNRLSSTATNLGDSFYYGKGLINVEAAAQ.

Glutamine 2 contributes to the Ca(2+) binding site. The 269-residue stretch at 5 to 273 (PYGIPLIKAD…KGLINVEAAA (269 aa)) folds into the Peptidase S8 domain. The active-site Charge relay system is aspartate 32. Aspartate 41 is a Ca(2+) binding site. Catalysis depends on histidine 63, which acts as the Charge relay system. Leucine 74, asparagine 76, valine 80, alanine 168, tyrosine 170, and valine 173 together coordinate Ca(2+). Catalysis depends on serine 220, which acts as the Charge relay system.

Belongs to the peptidase S8 family. Requires Ca(2+) as cofactor.

It localises to the secreted. It catalyses the reaction Hydrolysis of proteins with broad specificity for peptide bonds, and a preference for a large uncharged residue in P1. Hydrolyzes peptide amides.. In terms of biological role, subtilisin is an extracellular alkaline serine protease, it catalyzes the hydrolysis of proteins and peptide amides. The polypeptide is Subtilisin DY (apr) (Bacillus licheniformis).